A 1157-amino-acid chain; its full sequence is Myosin tail region-interacting protein MTI1 (1157 aa).

The region spanning 5–69 is the SH3 domain; that stretch reads EVPFKVVAQF…PKSFVAVQGS (65 aa). 2 disordered regions span residues 68–116 and 135–156; these read GSEV…GPVP and TAVSAQVQHDSSSGNGERKVPM. Residues 77 to 89 show a composition bias toward polar residues; the sequence is SSPNTGSTEQRTI. The span at 93 to 110 shows a compositional bias: basic and acidic residues; that stretch reads VEQKDLPEPISPETKKET. S103 is modified (phosphoserine). Residues 138–149 show a composition bias toward polar residues; sequence SAQVQHDSSSGN. S158 and S166 each carry phosphoserine. Disordered regions lie at residues 231–256 and 284–888; these read PEPINRAQVESGRIETENDQLKKDLP and KKAK…PKVA. Coiled coils occupy residues 234–301 and 356–430; these read INRA…NKNE and EKEQ…GASR. Basic and acidic residues-rich tracts occupy residues 242-256, 284-296, and 312-383; these read GRIETENDQLKKDLP, KKAKLEQEHERSA, and NEKT…RGEN. Positions 398–411 are enriched in acidic residues; sequence EGDNDEEKEEEDSE. Composition is skewed to basic and acidic residues over residues 412–423 and 506–524; these read ENRRAALRERMA and KTLDPHATTEHEQKQEHGT. The span at 544–558 shows a compositional bias: acidic residues; it reads DSDEDTDDHEFEDAN. A Phosphoserine modification is found at S565. A compositionally biased stretch (low complexity) spans 574–585; sequence GNNESENVNSGE. Residues 597–606 are compositionally biased toward basic and acidic residues; sequence RTAEVSHDIE. The span at 607–641 shows a compositional bias: polar residues; sequence NSSQNTTGNVLPVSSPQTRVARNGSINSLTKSISG. A phosphoserine mark is found at S621, S631, and S634. T636 is subject to Phosphothreonine. Phosphoserine is present on residues S638 and S647. The span at 642–653 shows a compositional bias: basic and acidic residues; that stretch reads ENRRKSINEYHD. Positions 654-668 are enriched in polar residues; sequence TVSTNSSALTETAQD. Composition is skewed to pro residues over residues 691–738 and 747–765; these read PHPV…PVSS and SIPPVPPTPPAPPAPPAPL. Basic and acidic residues predominate over residues 769 to 778; sequence KHNEVEEHVK. Over residues 795–808 the composition is skewed to pro residues; that stretch reads NTAPPLPRAPPVPP. The span at 832-853 shows a compositional bias: polar residues; that stretch reads QNVTASTPSMMSTQQRVPTSVL. T850 bears the Phosphothreonine mark. S889 is modified (phosphoserine). Phosphothreonine is present on residues T894 and T895. A Glycyl lysine isopeptide (Lys-Gly) (interchain with G-Cter in ubiquitin) cross-link involves residue K1012.

Binds to the SH3 domains of the type I myosins MYO3 and MYO5.

It is found in the cytoplasm. The protein localises to the cytoskeleton. It localises to the actin patch. Its function is as follows. Involved in the regulation of actin cytoskeleton. This is Myosin tail region-interacting protein MTI1 (BBC1) from Saccharomyces cerevisiae (strain ATCC 204508 / S288c) (Baker's yeast).